The sequence spans 209 residues: Superoxide dismutase [Mn/Fe] (209 aa).

Residues His-38, His-90, Asp-172, and His-176 each coordinate Fe(3+). The Mn(2+) site is built by His-38, His-90, Asp-172, and His-176.

This sequence belongs to the iron/manganese superoxide dismutase family. The cofactor is Mn(2+). Requires Fe(3+) as cofactor.

The catalysed reaction is 2 superoxide + 2 H(+) = H2O2 + O2. Functionally, destroys superoxide anion radicals which are normally produced within the cells and which are toxic to biological systems. Catalyzes the dismutation of superoxide anion radicals into O2 and H2O2 by successive reduction and oxidation of the transition metal ion at the active site. In Rickettsia prowazekii (strain Madrid E), this protein is Superoxide dismutase [Mn/Fe] (sodB).